We begin with the raw amino-acid sequence, 479 residues long: MNVTTPEVAFREYQTNCLASYISADPDITPSNLILQGYSGTGKTYTLKKYFNANPNLHAVWLEPVELVSWKPLLQAIARTVQYKLKTLYPNIPTTDYDPLQVEEPFLLVKTLHNIFVQYESLQEKTCLFLILDGFDSLQDLDAALFNKYIKLNELLPKDSKINIKFIYTMLETSFLQRYSTHCIPTVMFPRYNVDEVSTILVMSRCGELMEDSCLRKRIIEEQITDCTDDQFQNVAANFIHLIVQAFHSYTGNDIFALNDLIDFKWPKYVSRITKENIFEPLALYKSAIKLFLSTDDNLSENGQGESAITTNRDDLENSQTYDLSIISKYLLIASYICSYLEPRYDASIFSRKTRIIQGRAAYGRRKKKEVNPRYLQPSLFAIERLLAIFQAIFPIQGKAESGSLSALREESLMKANIEVFQNLSELHTLKLIATTMNKNIDYLSPKVRWKVNVPWEIIKEISESVHFNISDYFSDIHE.

ATP is bound at residue 37 to 44 (GYSGTGKT).

It belongs to the ORC5 family. As to quaternary structure, component of the origin recognition complex (ORC) composed of at least ORC1, ORC2, ORC3, ORC4, ORC5 and ORC6. Interacts with ORC6. Component of a cullin-RING ligase (CRL)-like complex composed of at least the cullin RTT101, a linker protein MMS1, and the potential substrate receptor ORC5. Interacts with RTT101 and MMS1.

It localises to the nucleus. In terms of biological role, component of the origin recognition complex (ORC) that binds origins of replication. It has a role in both chromosomal replication and mating type transcriptional silencing. Binds to the ARS consensus sequence (ACS) of origins of replication. This subunit is a candidate for the mediation of ATP-dependent binding of ORC to origins. May also be a substrate targeting component of a cullin-RING-based E3 ubiquitin-protein ligase complex RTT101(MMS1-ORC5). This Saccharomyces cerevisiae (strain ATCC 204508 / S288c) (Baker's yeast) protein is Origin recognition complex subunit 5 (ORC5).